Consider the following 2207-residue polypeptide: Mediator of RNA polymerase II transcription subunit 13-like (2207 aa).

Residues 337 to 355 show a composition bias toward polar residues; sequence VQSAASHLGSQDGGMSTMH. Disordered regions lie at residues 337-368, 384-403, 431-479, and 519-574; these read VQSA…PKLH, AQSK…AAHS, VGPS…KRPL, and KYDK…VPVN. Residues 356 to 368 are compositionally biased toward basic residues; that stretch reads SPKRSRKTPPKLH. A compositionally biased stretch (polar residues) spans 384–394; the sequence is AQSKRSQMSTP. Residues 442–453 are compositionally biased toward low complexity; it reads PGFSAGLPSSSS. Residues 463–475 show a composition bias toward basic and acidic residues; the sequence is KTTERQEKGDKLQ. Positions 528-539 are enriched in polar residues; that stretch reads SRNTSKQMNLNP. Residues 546–555 show a composition bias toward pro residues; sequence PISPLPPTLS. A phosphoserine mark is found at Ser548 and Ser555. Positions 664–668 match the LXXLL motif 1 motif; it reads LQRLL. Residues 731–747 show a composition bias toward basic and acidic residues; the sequence is GTEKDSLKKNKSEDGFG. The interval 731-767 is disordered; that stretch reads GTEKDSLKKNKSEDGFGTKDVTTPGHSTPVPDGKNAM. 2 positions are modified to phosphoserine: Ser812 and Ser821. Residues 816 to 847 form a disordered region; it reads ELGAVSPALRSSKMPTVGTEERPPGKDGRAAG. Basic and acidic residues predominate over residues 834–844; it reads TEERPPGKDGR. Ser918 carries the phosphoserine modification. Residues 1004 to 1091 form a disordered region; that stretch reads DPDYVNTPQM…STTRPLNSVE (88 aa). A compositionally biased stretch (polar residues) spans 1009–1019; sequence NTPQMNTPVTL. A compositionally biased stretch (low complexity) spans 1020 to 1031; that stretch reads NSAAPASNSGAG. Polar residues predominate over residues 1072–1087; the sequence is TDQGSPASTPSTTRPL. The LXXLL motif 2 motif lies at 1224–1228; the sequence is LLLLL. The leucine-zipper stretch occupies residues 1379–1400; the sequence is LPIPTLLVGYDKEFLTISPFSL. Disordered stretches follow at residues 1523 to 1652 and 2042 to 2077; these read LMPP…SVTE and GNLH…QGER. The segment covering 1541–1593 has biased composition (low complexity); it reads PGNAGSLPSNSGSGAPPAGSAFNPTSSSSANPTTSSSSASSGPPGSSAASAPG. Polar residues-rich tracts occupy residues 1612–1624 and 1635–1649; these read QNPS…TDRT and PGQS…GQDS. Position 2080 is a phosphoserine (Ser2080).

Belongs to the Mediator complex subunit 13 family. Component of the Mediator complex, which is composed of MED1, MED4, MED6, MED7, MED8, MED9, MED10, MED11, MED12, MED13, MED13L, MED14, MED15, MED16, MED17, MED18, MED19, MED20, MED21, MED22, MED23, MED24, MED25, MED26, MED27, MED29, MED30, MED31, CCNC, CDK8 and CDC2L6/CDK11. The MED12, MED13, CCNC and CDK8 subunits form a distinct module termed the CDK8 module. Mediator containing the CDK8 module is less active than Mediator lacking this module in supporting transcriptional activation. Individual preparations of the Mediator complex lacking one or more distinct subunits have been variously termed ARC, CRSP, DRIP, PC2, SMCC and TRAP. Highly expressed in heart and weakly expressed in brain, spleen, lung, liver, kidney and testis.

Its subcellular location is the nucleus. Component of the Mediator complex, a coactivator involved in the regulated transcription of nearly all RNA polymerase II-dependent genes. Mediator functions as a bridge to convey information from gene-specific regulatory proteins to the basal RNA polymerase II transcription machinery. Mediator is recruited to promoters by direct interactions with regulatory proteins and serves as a scaffold for the assembly of a functional preinitiation complex with RNA polymerase II and the general transcription factors. This subunit may specifically regulate transcription of targets of the Wnt signaling pathway and SHH signaling pathway. This chain is Mediator of RNA polymerase II transcription subunit 13-like (Med13l), found in Mus musculus (Mouse).